The primary structure comprises 100 residues: Large ribosomal subunit protein eL30 (100 aa).

The protein belongs to the eukaryotic ribosomal protein eL30 family.

This Aeropyrum pernix (strain ATCC 700893 / DSM 11879 / JCM 9820 / NBRC 100138 / K1) protein is Large ribosomal subunit protein eL30 (rpl30e).